The sequence spans 476 residues: Bifunctional protein HldE (476 aa).

The ribokinase stretch occupies residues 1-318; that stretch reads MKPTLPNYDQ…AEAIHGSQDS (318 aa). 195–198 contacts ATP; the sequence is NMLE. D264 is a catalytic residue. The cytidylyltransferase stretch occupies residues 344–476; the sequence is MTNGCFDILH…IIEAIKGGRG (133 aa).

In the N-terminal section; belongs to the carbohydrate kinase PfkB family. This sequence in the C-terminal section; belongs to the cytidylyltransferase family. As to quaternary structure, homodimer.

It catalyses the reaction D-glycero-beta-D-manno-heptose 7-phosphate + ATP = D-glycero-beta-D-manno-heptose 1,7-bisphosphate + ADP + H(+). The catalysed reaction is D-glycero-beta-D-manno-heptose 1-phosphate + ATP + H(+) = ADP-D-glycero-beta-D-manno-heptose + diphosphate. It functions in the pathway nucleotide-sugar biosynthesis; ADP-L-glycero-beta-D-manno-heptose biosynthesis; ADP-L-glycero-beta-D-manno-heptose from D-glycero-beta-D-manno-heptose 7-phosphate: step 1/4. Its pathway is nucleotide-sugar biosynthesis; ADP-L-glycero-beta-D-manno-heptose biosynthesis; ADP-L-glycero-beta-D-manno-heptose from D-glycero-beta-D-manno-heptose 7-phosphate: step 3/4. In terms of biological role, catalyzes the phosphorylation of D-glycero-D-manno-heptose 7-phosphate at the C-1 position to selectively form D-glycero-beta-D-manno-heptose-1,7-bisphosphate. Functionally, catalyzes the ADP transfer from ATP to D-glycero-beta-D-manno-heptose 1-phosphate, yielding ADP-D-glycero-beta-D-manno-heptose. In Aliivibrio salmonicida (strain LFI1238) (Vibrio salmonicida (strain LFI1238)), this protein is Bifunctional protein HldE.